The sequence spans 172 residues: 3-hydroxydecanoyl-[acyl-carrier-protein] dehydratase (172 aa).

Histidine 71 is a catalytic residue.

This sequence belongs to the thioester dehydratase family. FabA subfamily. In terms of assembly, homodimer.

It is found in the cytoplasm. It catalyses the reaction a (3R)-hydroxyacyl-[ACP] = a (2E)-enoyl-[ACP] + H2O. It carries out the reaction (3R)-hydroxydecanoyl-[ACP] = (2E)-decenoyl-[ACP] + H2O. The enzyme catalyses (2E)-decenoyl-[ACP] = (3Z)-decenoyl-[ACP]. It functions in the pathway lipid metabolism; fatty acid biosynthesis. Functionally, necessary for the introduction of cis unsaturation into fatty acids. Catalyzes the dehydration of (3R)-3-hydroxydecanoyl-ACP to E-(2)-decenoyl-ACP and then its isomerization to Z-(3)-decenoyl-ACP. Can catalyze the dehydratase reaction for beta-hydroxyacyl-ACPs with saturated chain lengths up to 16:0, being most active on intermediate chain length. The chain is 3-hydroxydecanoyl-[acyl-carrier-protein] dehydratase from Pectobacterium carotovorum subsp. carotovorum (strain PC1).